The primary structure comprises 60 residues: Large ribosomal subunit protein bL32 (60 aa).

Basic residues predominate over residues 1-23 (MAKHPVPKKKTSKSKRDMRRSHH). Residues 1 to 26 (MAKHPVPKKKTSKSKRDMRRSHHALT) form a disordered region.

This sequence belongs to the bacterial ribosomal protein bL32 family.

This Deinococcus deserti (strain DSM 17065 / CIP 109153 / LMG 22923 / VCD115) protein is Large ribosomal subunit protein bL32.